A 325-amino-acid polypeptide reads, in one-letter code: Tetraacyldisaccharide 4'-kinase (325 aa).

An ATP-binding site is contributed by 58-65 (TVGGSGKT).

This sequence belongs to the LpxK family.

It catalyses the reaction a lipid A disaccharide + ATP = a lipid IVA + ADP + H(+). It participates in glycolipid biosynthesis; lipid IV(A) biosynthesis; lipid IV(A) from (3R)-3-hydroxytetradecanoyl-[acyl-carrier-protein] and UDP-N-acetyl-alpha-D-glucosamine: step 6/6. In terms of biological role, transfers the gamma-phosphate of ATP to the 4'-position of a tetraacyldisaccharide 1-phosphate intermediate (termed DS-1-P) to form tetraacyldisaccharide 1,4'-bis-phosphate (lipid IVA). The protein is Tetraacyldisaccharide 4'-kinase of Coxiella burnetii (strain CbuK_Q154) (Coxiella burnetii (strain Q154)).